A 110-amino-acid chain; its full sequence is MISSANNKGAGTSRRKLRSEKAALQFSVSRVEYSLKKGRYCRRLGATAPVYLAAVLENLVAEVLDMAANVTEETSPIVIKPRHIMLAPRNDVEVEQAVSRCHHLGIRCRP.

The protein belongs to the histone H2A family. In terms of assembly, the nucleosome is a histone octamer containing two molecules each of H2A, H2B, H3 and H4 assembled in one H3-H4 heterotetramer and two H2A-H2B heterodimers. The octamer wraps approximately 147 bp of DNA. Expressed in the generative cell within the bicellular pollen. Not detected in other reproductive or vegetative tissues.

Its subcellular location is the nucleus. It is found in the chromosome. Its function is as follows. Core component of nucleosome. Nucleosomes wrap and compact DNA into chromatin, limiting DNA accessibility to the cellular machineries which require DNA as a template. Histones thereby play a central role in transcription regulation, DNA repair, DNA replication and chromosomal stability. DNA accessibility is regulated via a complex set of post-translational modifications of histones, also called histone code, and nucleosome remodeling. The sequence is that of Histone H2A.1 (gcH2A) from Lilium longiflorum (Trumpet lily).